A 118-amino-acid chain; its full sequence is Large ribosomal subunit protein bL12 (118 aa).

Position 1 is an N-acetylmethionine; in form MA2 (methionine 1).

It belongs to the bacterial ribosomal protein bL12 family. As to quaternary structure, homodimer. Part of the ribosomal stalk of the 50S ribosomal subunit. Forms a multimeric L10(L12)X complex, where L10 forms an elongated spine to which 2 to 4 L12 dimers bind in a sequential fashion. Binds GTP-bound translation factors. Acetylation of Met-1 converts MA1 to MA2.

Functionally, forms part of the ribosomal stalk which helps the ribosome interact with GTP-bound translation factors. Is thus essential for accurate translation. The chain is Large ribosomal subunit protein bL12 from Micrococcus luteus (Micrococcus lysodeikticus).